Here is a 417-residue protein sequence, read N- to C-terminus: Guanine nucleotide-exchange factor SEC12 (417 aa).

Topologically, residues 1-388 (MGRRRGVELY…QLHLLPSRRS (388 aa)) are cytoplasmic. Position 10 is a 3'-nitrotyrosine (Y10). The disordered stretch occupies residues 101–135 (KGSKAEKSGSKEQGPRQRKGAAPAEKKSGAEVHPE). Composition is skewed to basic and acidic residues over residues 103 to 115 (SKAE…EQGP) and 124 to 135 (AEKKSGAEVHPE). WD repeat units lie at residues 152–191 (STEP…KVLE), 194–232 (AHEG…TQLQ), and 298–337 (CGHE…RLYY). The chain crosses the membrane as a helical span at residues 389–409 (VPVWLLLLLCVGLIIVTILLL). Over 410–417 (QSAFPGFL) the chain is Lumenal.

As to quaternary structure, interacts with SAR1B (GDP-bound form). Interacts with MIA2; recruits PREB to endoplasmic reticulum exit sites. Interacts with CIDEB; facilitating loading of SCAP-SREBP into COPII vesicles.

It is found in the endoplasmic reticulum membrane. Its subcellular location is the nucleus. Guanine nucleotide exchange factor (GEF) that regulates the assembly of the coat protein complex II/COPII in endoplasmic reticulum (ER) to Golgi vesicle-mediated transport. Selectively activates SAR1A and SAR1B by promoting the exchange of guanosine diphosphate (GDP) for guanosine triphosphate (GTP) in these small GTPases. In their activated GTP-bound state, SAR1A and SAR1B insert into the membrane of the endoplasmic reticulum where they recruit the remainder of the coat protein complex II/COPII which is responsible for both the sorting of proteins and the deformation and budding of membranes into vesicles destined to the Golgi. In terms of biological role, was first identified based on its probable role in the regulation of pituitary gene transcription. Binds to the prolactin gene (PRL) promoter and seems to activate transcription. This is Guanine nucleotide-exchange factor SEC12 from Rattus norvegicus (Rat).